Reading from the N-terminus, the 101-residue chain is Growth-regulated alpha protein (101 aa).

The first 28 residues, 1–28 (MAPATRSLLRAPLLLLLLLLATSRLATG), serve as a signal peptide directing secretion. Disulfide bonds link Cys37/Cys63 and Cys39/Cys79.

The protein belongs to the intercrine alpha (chemokine CxC) family.

The protein localises to the secreted. Functionally, has chemotactic activity for neutrophils. The polypeptide is Growth-regulated alpha protein (CXCL1) (Cricetulus griseus (Chinese hamster)).